Reading from the N-terminus, the 1214-residue chain is Protein charlatan (1214 aa).

3 disordered regions span residues M1–N20, H213–H238, and S250–K284. Low complexity predominate over residues A258–S276. C2H2-type zinc fingers lie at residues Y305–H327 and F333–H356. Disordered stretches follow at residues R367–I397 and P463–L488. The span at G473–S485 shows a compositional bias: gly residues. 2 consecutive C2H2-type zinc fingers follow at residues F496–H518 and F522–H545. 3 disordered regions span residues S741 to P790, N848 to S946, and L1062 to S1084. 4 stretches are compositionally biased toward low complexity: residues Q855–Q871, N885–N896, S923–S946, and K1071–S1084.

Expressed in the PNS and CNS. In early blastoderm stages, it is ubiquitously expressed, then, before stage 5, it disappears from the poles of the embryo and faint stripes are visible. At stage 5, it also accumulates in the dorsal region, cephalic furrow ectodermal patches between the tracheal pits, where neurons of the PNS appear. In older embryos (stage 15) a strong expression is mostly restricted to the central nervous system (CNS) and PNS. In PNS, the pattern suggests that expression occur in many of the neurons of the ventral, lateral and dorsal clusters of neurons. In third instar wing disks, it is expressed in rows of cells on either side of the prospective anterior wing margin and in groups of cells that coincide with proneural clusters of ac/sc expression. Also expressed independently of ac/sc in certain areas of the disk, such as the postnotum and posterior dorsal proximal wing. Expressed in the proneural clusters of the leg disks and in the eye/antenna disk.

The protein localises to the nucleus. Probable transcription factor involved in the development of the adult pattern of macrochaetae. Required for accumulation of achaete (ac) and scute (sc) in proneural clusters. Probably acts by binding to the proneural cluster-specific enhancers of the ac/sc complex and increasing enhancer efficiency, thereby acting as a stimulator of ac/sc expression in proneural clusters. Also required for correct development of the embryonic/larval peripheral nervous system (PNS). This chain is Protein charlatan (chn), found in Drosophila melanogaster (Fruit fly).